The sequence spans 101 residues: Putative pterin-4-alpha-carbinolamine dehydratase (101 aa).

It belongs to the pterin-4-alpha-carbinolamine dehydratase family.

The catalysed reaction is (4aS,6R)-4a-hydroxy-L-erythro-5,6,7,8-tetrahydrobiopterin = (6R)-L-erythro-6,7-dihydrobiopterin + H2O. This chain is Putative pterin-4-alpha-carbinolamine dehydratase, found in Rhizobium etli (strain ATCC 51251 / DSM 11541 / JCM 21823 / NBRC 15573 / CFN 42).